The following is a 510-amino-acid chain: NAD(P)H-quinone oxidoreductase subunit 2 B, chloroplastic (510 aa).

The next 13 helical transmembrane spans lie at 24 to 44 (LLLFDGSFIFPECILIFGLIL), 57 to 77 (IPWLYFISSTSLVMSITALLF), 99 to 119 (IFQFLILLCSTLCIPLSVEYI), 124 to 144 (MAIAEFLLFVLTATLGGMFLC), 149 to 169 (LITIFVAPECFSLCSYLLSGY), 183 to 203 (YLLMGGASSSILVHGFSWLYG), 227 to 247 (PGISIALIFITVGIGFKLSPA), 295 to 315 (WHLLLEILAILSMILGNLIAI), 323 to 343 (MLAYSSIGQIGYVIIGIIVGN), 354 to 374 (YMLFYISMNLGTFACIVLFGL), 395 to 415 (ALSLAPCLLSLGGLPPLAGFF), 418 to 438 (LHLFWCGWQAGLYFLVSIGLL), and 484 to 504 (MIVCVIASTIPGISMNPIIAI).

This sequence belongs to the complex I subunit 2 family. As to quaternary structure, NDH is composed of at least 16 different subunits, 5 of which are encoded in the nucleus.

It is found in the plastid. It localises to the chloroplast thylakoid membrane. It catalyses the reaction a plastoquinone + NADH + (n+1) H(+)(in) = a plastoquinol + NAD(+) + n H(+)(out). The enzyme catalyses a plastoquinone + NADPH + (n+1) H(+)(in) = a plastoquinol + NADP(+) + n H(+)(out). In terms of biological role, NDH shuttles electrons from NAD(P)H:plastoquinone, via FMN and iron-sulfur (Fe-S) centers, to quinones in the photosynthetic chain and possibly in a chloroplast respiratory chain. The immediate electron acceptor for the enzyme in this species is believed to be plastoquinone. Couples the redox reaction to proton translocation, and thus conserves the redox energy in a proton gradient. The chain is NAD(P)H-quinone oxidoreductase subunit 2 B, chloroplastic from Gossypium barbadense (Sea Island cotton).